A 221-amino-acid polypeptide reads, in one-letter code: Large ribosomal subunit protein uL4 (221 aa).

Positions 47–77 (GTASTKTRGEVSGGGRKPWIQKHTGRARQGS) are disordered.

It belongs to the universal ribosomal protein uL4 family. As to quaternary structure, part of the 50S ribosomal subunit.

One of the primary rRNA binding proteins, this protein initially binds near the 5'-end of the 23S rRNA. It is important during the early stages of 50S assembly. It makes multiple contacts with different domains of the 23S rRNA in the assembled 50S subunit and ribosome. In terms of biological role, forms part of the polypeptide exit tunnel. This Thermosipho melanesiensis (strain DSM 12029 / CIP 104789 / BI429) protein is Large ribosomal subunit protein uL4.